The following is a 428-amino-acid chain: Tyrosine--tRNA ligase (428 aa).

Y34 provides a ligand contact to L-tyrosine. Residues P39–H48 carry the 'HIGH' region motif. The L-tyrosine site is built by Y171 and Q175. Residues K236–T240 carry the 'KMSKS' region motif. An ATP-binding site is contributed by K239. In terms of domain architecture, S4 RNA-binding spans V358–V424.

This sequence belongs to the class-I aminoacyl-tRNA synthetase family. TyrS type 1 subfamily. In terms of assembly, homodimer.

It localises to the cytoplasm. It carries out the reaction tRNA(Tyr) + L-tyrosine + ATP = L-tyrosyl-tRNA(Tyr) + AMP + diphosphate + H(+). Catalyzes the attachment of tyrosine to tRNA(Tyr) in a two-step reaction: tyrosine is first activated by ATP to form Tyr-AMP and then transferred to the acceptor end of tRNA(Tyr). The chain is Tyrosine--tRNA ligase from Oceanobacillus iheyensis (strain DSM 14371 / CIP 107618 / JCM 11309 / KCTC 3954 / HTE831).